Here is a 635-residue protein sequence, read N- to C-terminus: Elongation factor 4 (635 aa).

A tr-type G domain is found at 11–193 (EKIRNFSIIA…QIVEKVPAPT (183 aa)). Residues 23–28 (DHGKST) and 140–143 (NKID) each bind GTP.

The protein belongs to the TRAFAC class translation factor GTPase superfamily. Classic translation factor GTPase family. LepA subfamily.

The protein resides in the cell membrane. The enzyme catalyses GTP + H2O = GDP + phosphate + H(+). In terms of biological role, required for accurate and efficient protein synthesis under certain stress conditions. May act as a fidelity factor of the translation reaction, by catalyzing a one-codon backward translocation of tRNAs on improperly translocated ribosomes. Back-translocation proceeds from a post-translocation (POST) complex to a pre-translocation (PRE) complex, thus giving elongation factor G a second chance to translocate the tRNAs correctly. Binds to ribosomes in a GTP-dependent manner. The sequence is that of Elongation factor 4 from Streptococcus pyogenes serotype M12 (strain MGAS2096).